The chain runs to 118 residues: uncharacterized protein (118 aa).

This is an uncharacterized protein from Aquifex aeolicus (strain VF5).